The primary structure comprises 269 residues: MAVGKNKGVSKGGKKGSKKKVVDPFTRKDWYDVKAPNMFKNRQVGKTLVNRTQGTKIASDGLKGRVFEVSLADLQNEPDAERSFRKFKLVAESVNGRDVLTNFHGMALTTDKLRSMVKKWQTLIECSVDVKTTDGFMLRVFCIGFTIKDSMSQRKTCYAQHSQIKNIRAKMTAIIKREITSTDLKGVVEKLLPDSIAKDIEKACQVVYPLHDVYIRKVKVLKKPRFDLSSLMELHGDGGGKAAEVSTGAASGVVVDRPEGYEPPVQASV.

Residues 1–20 form a disordered region; the sequence is MAVGKNKGVSKGGKKGSKKK.

It belongs to the eukaryotic ribosomal protein eS1 family. Component of the small ribosomal subunit. Mature ribosomes consist of a small (40S) and a large (60S) subunit. The 40S subunit contains about 33 different proteins and 1 molecule of RNA (18S). The 60S subunit contains about 49 different proteins and 3 molecules of RNA (28S, 5.8S and 5S).

Its subcellular location is the cytoplasm. Has an essential role in oogenesis. This is Small ribosomal subunit protein eS1 from Anopheles gambiae (African malaria mosquito).